Reading from the N-terminus, the 174-residue chain is RNA pyrophosphohydrolase (174 aa).

The Nudix hydrolase domain occupies 6–149; that stretch reads GFRANVGIII…KRDVYRKVMK (144 aa). The Nudix box signature appears at 38–59; that stretch reads GGVDDGETAEEAMYRELYEEVG.

Belongs to the Nudix hydrolase family. RppH subfamily. A divalent metal cation is required as a cofactor.

In terms of biological role, accelerates the degradation of transcripts by removing pyrophosphate from the 5'-end of triphosphorylated RNA, leading to a more labile monophosphorylated state that can stimulate subsequent ribonuclease cleavage. This Shewanella baltica (strain OS223) protein is RNA pyrophosphohydrolase.